The sequence spans 450 residues: Cyclic GMP-AMP phosphodiesterase SMPDL3A (450 aa).

The N-terminal stretch at 1–22 is a signal peptide; the sequence is MARLGALVCCLLAAWHCRPGLG. Zn(2+)-binding residues include Asp-42 and His-44. Cys-59 and Cys-78 are disulfide-bonded. Asp-107 lines the Zn(2+) pocket. Residue His-111 coordinates ATP. 2 N-linked (GlcNAc...) asparagine glycosylation sites follow: Asn-124 and Asn-128. Zn(2+) is bound at residue Asn-148. Residues Asn-148 and His-149 each coordinate ATP. N-linked (GlcNAc...) asparagine glycosylation is found at Asn-219 and Asn-235. His-249, His-290, and His-292 together coordinate Zn(2+). N-linked (GlcNAc...) asparagine glycans are attached at residues Asn-353 and Asn-370. 2 disulfides stabilise this stretch: Cys-417–Cys-421 and Cys-427–Cys-440.

Belongs to the acid sphingomyelinase family. As to quaternary structure, monomer. Homodimer; homodimerizes following 2',3'-cGAMP-binding. Requires Zn(2+) as cofactor.

The protein resides in the secreted. The catalysed reaction is 2',3'-cGAMP + H2O = 5'-pGpA(2'-5') + H(+). It catalyses the reaction 5'-pGpA(2'-5') + H2O = 5'-GpA(2'-5') + phosphate. The enzyme catalyses a ribonucleoside 5'-triphosphate + H2O = a ribonucleoside 5'-diphosphate + phosphate + H(+). It carries out the reaction ATP + H2O = ADP + phosphate + H(+). Its function is as follows. Cyclic-nucleotide phosphodiesterase that acts as a negative regulator of innate immunity by mediating degradation of 2',3'-cGAMP, thereby inhibiting the cGAS-STING signaling. Specifically linearizes 2',3'-cGAMP into 2'5'-bond pGpA and further hydrolyzes pGpA to produce GpA. Also has in vitro nucleotide phosphodiesterase activity with nucleoside triphosphates, such as ATP. Has in vitro activity with p-nitrophenyl-TMP. Has lower activity with nucleoside diphosphates, and no activity with nucleoside monophosphates. Has in vitro activity with CDP-choline, giving rise to CMP and phosphocholine. Has in vitro activity with CDP-ethanolamine. Does not have sphingomyelin phosphodiesterase activity. The protein is Cyclic GMP-AMP phosphodiesterase SMPDL3A (SMPDL3A) of Bos taurus (Bovine).